Reading from the N-terminus, the 1516-residue chain is Myosin-52 (1516 aa).

A Myosin N-terminal SH3-like domain is found at 7–62 (YKGLQCWIPDEQSQWIPGSIKDCRVEGEKAFLTVQDENENETVITVKPDDLNYEGR). In terms of domain architecture, Myosin motor spans 73–766 (SDADDLTDLS…VTPLLESARD (694 aa)). 167 to 174 (GESGAGKT) contacts ATP. The tract at residues 647-669 (LVSLMSTINETNAHYIRCIKPNE) is actin-binding. IQ domains follow at residues 793-813 (RKRVRSFQAVAHGFLSRRHTE), 818-838 (SSNIIKLQSLWRTALKRKEFI), 840-865 (TKNSILKVQSIIRGFLLRQTLEEKTK), 866-886 (HDATLIIQSLWLTFKAHKHYK), and 888-917 (LQYYAVRIQSLWRMKLAKRQLTELKIESTK). Positions 926 to 1034 (YRLESRLFEI…LKSQLKNYDM (109 aa)) form a coiled coil. Phosphoserine is present on residues Ser1065 and Ser1072. One can recognise a Dilute domain in the interval 1163 to 1431 (ERYCVHTLEY…SELSKNIVAE (269 aa)).

Belongs to the TRAFAC class myosin-kinesin ATPase superfamily. Myosin family.

Its subcellular location is the cytoplasm. Involved in cell wall deposition where it has a role in the localization of mok1. This chain is Myosin-52 (myo52), found in Schizosaccharomyces pombe (strain 972 / ATCC 24843) (Fission yeast).